A 260-amino-acid chain; its full sequence is Adenosylcobinamide-GDP ribazoletransferase (260 aa).

8 helical membrane passes run 3–23, 36–56, 60–80, 108–128, 133–153, 180–200, 206–226, and 239–259; these read APLWLRDLAGAWIFYSVLPAW, FAPWIGLVLGGLQSFLWLVLI, WPTSAVALLVIGLGAWLSGGL, VGASGVQALLVVVLLQIAALL, LAPLALLIAAFWGRCAPLWAM, ALPAFLVLLLALTVVPLLMIV, MVLMAGIGVGVLPAFLVPELL, and GASVVLVETITLLLLAVLLTA.

This sequence belongs to the CobS family. It depends on Mg(2+) as a cofactor.

It is found in the cell inner membrane. It catalyses the reaction alpha-ribazole + adenosylcob(III)inamide-GDP = adenosylcob(III)alamin + GMP + H(+). The enzyme catalyses alpha-ribazole 5'-phosphate + adenosylcob(III)inamide-GDP = adenosylcob(III)alamin 5'-phosphate + GMP + H(+). Its pathway is cofactor biosynthesis; adenosylcobalamin biosynthesis; adenosylcobalamin from cob(II)yrinate a,c-diamide: step 7/7. Its function is as follows. Joins adenosylcobinamide-GDP and alpha-ribazole to generate adenosylcobalamin (Ado-cobalamin). Also synthesizes adenosylcobalamin 5'-phosphate from adenosylcobinamide-GDP and alpha-ribazole 5'-phosphate. This chain is Adenosylcobinamide-GDP ribazoletransferase, found in Prochlorococcus marinus (strain MIT 9303).